The sequence spans 834 residues: Putative COX1/OXI3 intron 1 protein (834 aa).

Residues 162–188 form a disordered region; it reads MKDTNNTKGNTKSEGSTERGNSGVDRG. The segment covering 167-181 has biased composition (polar residues); the sequence is NTKGNTKSEGSTERG. A Reverse transcriptase domain is found at 296–577; sequence LSNELGTGKF…TPARFLGYNI (282 aa).

The protein resides in the mitochondrion. This Saccharomyces cerevisiae (strain ATCC 204508 / S288c) (Baker's yeast) protein is Putative COX1/OXI3 intron 1 protein (AI1).